The following is a 138-amino-acid chain: Transcription antitermination protein NusB (138 aa).

The protein belongs to the NusB family.

Functionally, involved in transcription antitermination. Required for transcription of ribosomal RNA (rRNA) genes. Binds specifically to the boxA antiterminator sequence of the ribosomal RNA (rrn) operons. The sequence is that of Transcription antitermination protein NusB from Geobacter sulfurreducens (strain ATCC 51573 / DSM 12127 / PCA).